The following is a 1007-amino-acid chain: Calmodulin-binding transcription activator 1 (1007 aa).

A DNA-binding region (CG-1) is located at residues 18 to 144 (MEQLLSEAQH…YLEVKGNRTS (127 aa)). Residues 148-164 (KENNSNSVNGTASVNID) show a composition bias toward polar residues. Residues 148 to 227 (KENNSNSVNG…VHGNRVRESD (80 aa)) form a disordered region. Over residues 165-176 (STASPTSTLSSL) the composition is skewed to low complexity. Positions 183-202 (GDSQQASSVLRPSPEPQTGN) are enriched in polar residues. The transcription activation stretch occupies residues 233–398 (DVRALDTVGN…TVECETAAAG (166 aa)). ANK repeat units lie at residues 612 to 641 (DGQG…NINF) and 645 to 674 (NGWS…DAGA). IQ domains lie at 821–850 (LSCA…RIVK) and 844–873 (IRQR…SVGL). Residues 869-891 (WSVGLLEKIILRWRRKGNGLRGF) form a calmodulin-binding region. The stretch at 915–943 (QEDEYDYLKEGRKQTEERLQKALTRVKSM) forms a coiled coil. S942 bears the Phosphoserine mark.

This sequence belongs to the CAMTA family. As to expression, expressed in roots, stems, leaves, pollen and siliques.

The protein localises to the nucleus. Transcription activator that binds calmodulin in a calcium-dependent manner in vitro. Binds to the DNA consensus sequence 5'-[ACG]CGCG[GTC]-3'. Regulates transcriptional activity in response to calcium signals. Involved in freezing tolerance. Involved in freezing tolerance in association with CAMTA2 and CAMTA3. Contributes together with CAMTA2 and CAMTA3 to the positive regulation of the cold-induced expression of DREB1A/CBF3, DREB1B/CBF1 and DREB1C/CBF2. Involved in drought stress responses by regulating several drought-responsive genes. Involved in auxin signaling and responses to abiotic stresses. Activates the expression of the V-PPase proton pump AVP1 in pollen. The polypeptide is Calmodulin-binding transcription activator 1 (Arabidopsis thaliana (Mouse-ear cress)).